The sequence spans 525 residues: Peptide chain release factor 3 (525 aa).

The tr-type G domain maps to 8–276; sequence AMRRTFAIIS…AFVKEAPPPQ (269 aa). GTP contacts are provided by residues 17-24, 85-89, and 139-142; these read SHPDAGKT, DTPGH, and NKMD.

The protein belongs to the TRAFAC class translation factor GTPase superfamily. Classic translation factor GTPase family. PrfC subfamily.

The protein localises to the cytoplasm. Increases the formation of ribosomal termination complexes and stimulates activities of RF-1 and RF-2. It binds guanine nucleotides and has strong preference for UGA stop codons. It may interact directly with the ribosome. The stimulation of RF-1 and RF-2 is significantly reduced by GTP and GDP, but not by GMP. This chain is Peptide chain release factor 3, found in Coxiella burnetii (strain RSA 331 / Henzerling II).